We begin with the raw amino-acid sequence, 1295 residues long: Phosphoribosylformylglycinamidine synthase (1295 aa).

Positions 302–327 (APFSGAATGSGGEIRDEGATGRGSKP) are disordered. ATP contacts are provided by residues 306-317 (GAATGSGGEIRD) and alanine 677. Mg(2+)-binding residues include aspartate 678, glutamate 717, asparagine 721, and aspartate 884. Residue serine 886 coordinates ATP. The region spanning 1042 to 1295 (MAILREQGVN…MFRNARVYLG (254 aa)) is the Glutamine amidotransferase type-1 domain. Cysteine 1135 (nucleophile) is an active-site residue. Catalysis depends on residues histidine 1260 and glutamate 1262.

It in the N-terminal section; belongs to the FGAMS family. As to quaternary structure, monomer.

The protein resides in the cytoplasm. The catalysed reaction is N(2)-formyl-N(1)-(5-phospho-beta-D-ribosyl)glycinamide + L-glutamine + ATP + H2O = 2-formamido-N(1)-(5-O-phospho-beta-D-ribosyl)acetamidine + L-glutamate + ADP + phosphate + H(+). It participates in purine metabolism; IMP biosynthesis via de novo pathway; 5-amino-1-(5-phospho-D-ribosyl)imidazole from N(2)-formyl-N(1)-(5-phospho-D-ribosyl)glycinamide: step 1/2. In terms of biological role, phosphoribosylformylglycinamidine synthase involved in the purines biosynthetic pathway. Catalyzes the ATP-dependent conversion of formylglycinamide ribonucleotide (FGAR) and glutamine to yield formylglycinamidine ribonucleotide (FGAM) and glutamate. The protein is Phosphoribosylformylglycinamidine synthase of Pseudoalteromonas atlantica (strain T6c / ATCC BAA-1087).